A 256-amino-acid chain; its full sequence is Exosome complex component RRP41-like (256 aa).

This sequence belongs to the RNase PH family. In terms of assembly, probable component of the RNA exosome complex. Highly expressed in imbibed seeds and young seedlings.

Its subcellular location is the cytoplasm. It localises to the nucleus. Functionally, non-catalytic component of the RNA exosome complex which has 3'-&gt;5' exoribonuclease activity and participates in a multitude of cellular RNA processing, maturation and degradation events. In vitro, is a processive phosphorolytic exonuclease and requires a single-stranded poly(A) tail on the substrate RNA for its activity. Plays an important role in seed germination and early seedling growth by mediating specific cytoplasmic mRNA decay of transcripts coding for the abscisic acid (ABA) biosynthetic enzymes NCED5 and NCED6, and the ABA signaling transcription factors ABI3 and ABI4. The polypeptide is Exosome complex component RRP41-like (Arabidopsis thaliana (Mouse-ear cress)).